The following is a 595-amino-acid chain: Outer dynein arm-docking complex subunit 3 (595 aa).

The tract at residues 1–69 (MTSPLCRAAS…RGAGKPSVHS (69 aa)) is disordered. 2 coiled-coil regions span residues 94-327 (WNIK…REHL) and 385-473 (FAQL…ASKL).

As to quaternary structure, component of the outer dynein arm-docking complex along with ODAD1, ODAD2, ODAD4 and CLXN. Interacts with ODAD1. Interacts with PIERCE1 and PIERCE2; the interactions link the outer dynein arms docking complex (ODA-DC) to the internal microtubule inner proteins (MIP) in cilium axoneme.

It is found in the cytoplasm. The protein resides in the cytoskeleton. The protein localises to the cilium basal body. It localises to the microtubule organizing center. Its subcellular location is the centrosome. It is found in the centriole. The protein resides in the cilium axoneme. Component of the outer dynein arm-docking complex (ODA-DC) that mediates outer dynein arms (ODA) binding onto the doublet microtubule. Involved in mediating assembly of both ODAs and their axonemal docking complex onto ciliary microtubules. This Homo sapiens (Human) protein is Outer dynein arm-docking complex subunit 3.